A 120-amino-acid polypeptide reads, in one-letter code: Small ribosomal subunit protein uS13 (120 aa).

The tract at residues 96–120 is disordered; that stretch reads PCRGQRTRTNARTRKGPRKAIAGKK.

The protein belongs to the universal ribosomal protein uS13 family. Part of the 30S ribosomal subunit. Forms a loose heterodimer with protein S19. Forms two bridges to the 50S subunit in the 70S ribosome.

Its function is as follows. Located at the top of the head of the 30S subunit, it contacts several helices of the 16S rRNA. In the 70S ribosome it contacts the 23S rRNA (bridge B1a) and protein L5 of the 50S subunit (bridge B1b), connecting the 2 subunits; these bridges are implicated in subunit movement. Contacts the tRNAs in the A and P-sites. This chain is Small ribosomal subunit protein uS13, found in Chromobacterium violaceum (strain ATCC 12472 / DSM 30191 / JCM 1249 / CCUG 213 / NBRC 12614 / NCIMB 9131 / NCTC 9757 / MK).